The primary structure comprises 210 residues: N-(5'-phosphoribosyl)anthranilate isomerase (210 aa).

Belongs to the TrpF family.

It carries out the reaction N-(5-phospho-beta-D-ribosyl)anthranilate = 1-(2-carboxyphenylamino)-1-deoxy-D-ribulose 5-phosphate. It functions in the pathway amino-acid biosynthesis; L-tryptophan biosynthesis; L-tryptophan from chorismate: step 3/5. The sequence is that of N-(5'-phosphoribosyl)anthranilate isomerase from Methanococcus aeolicus (strain ATCC BAA-1280 / DSM 17508 / OCM 812 / Nankai-3).